A 96-amino-acid chain; its full sequence is Fluoride-specific ion channel FluC 1 (96 aa).

2 consecutive transmembrane segments (helical) span residues 4 to 24 (LIQG…RLAL) and 26 to 46 (LWLG…AFLM). Residues G61 and T64 each contribute to the Na(+) site. A helical transmembrane segment spans residues 69–89 (MMLNDVSFYFFTAVGCILAWL).

Belongs to the fluoride channel Fluc/FEX (TC 1.A.43) family.

It is found in the cell membrane. The catalysed reaction is fluoride(in) = fluoride(out). With respect to regulation, na(+) is not transported, but it plays an essential structural role and its presence is essential for fluoride channel function. Fluoride-specific ion channel. Important for reducing fluoride concentration in the cell, thus reducing its toxicity. The protein is Fluoride-specific ion channel FluC 1 of Corynebacterium glutamicum (strain ATCC 13032 / DSM 20300 / JCM 1318 / BCRC 11384 / CCUG 27702 / LMG 3730 / NBRC 12168 / NCIMB 10025 / NRRL B-2784 / 534).